The chain runs to 692 residues: Acyl-coenzyme A oxidase 2, peroxisomal (692 aa).

A peroxisome-targeting transit peptide spans 1–49 (MESRREKNPMTEEESDGLIAARRIQRLSLHLSPSLTPSPSLPLVQTETC). 7 residues coordinate FAD: Thr-186, Ser-192, Gly-225, Arg-365, Gln-384, Gly-452, and Thr-473. Catalysis depends on Glu-475, which acts as the Proton acceptor. Asp-477 is an FAD binding site.

It belongs to the acyl-CoA oxidase family. Homodimer. Requires FAD as cofactor. As to expression, expressed mainly in flowers and young seedlings. Lower expression in roots, leaves and bracts.

The protein localises to the peroxisome. It carries out the reaction a 2,3-saturated acyl-CoA + O2 = a (2E)-enoyl-CoA + H2O2. Functionally, catalyzes the desaturation of long-chain acyl-CoAs to 2-trans-enoyl-CoAs. Active on substrates longer than C14 and mostly with C18-CoA. Activity on long-chain mono-unsaturated substrates is double than with the corresponding saturated substrates. This Arabidopsis thaliana (Mouse-ear cress) protein is Acyl-coenzyme A oxidase 2, peroxisomal.